A 488-amino-acid chain; its full sequence is Mannosylglycerate hydrolase MGH2 (488 aa).

Residues Tyr94, 98 to 101, Tyr146, Gln167, and Gly227 contribute to the substrate site; that span reads WNWD. The Proton donor role is filled by Asp229. Substrate-binding positions include Arg262 and 415 to 416; that span reads YW. The active-site Proton acceptor is Glu459.

Belongs to the glycosyl hydrolase 63 family.

The catalysed reaction is (2R)-2-O-(alpha-D-mannosyl)-glycerate + H2O = D-mannose + (R)-glycerate. The enzyme catalyses (2R)-2-O-(alpha-D-glucopyranosyl)-glycerate + H2O = (R)-glycerate + D-glucose. With respect to regulation, activity is not dependent on divalent cations, but it is enhanced by Mn(2+). Catalyzes the hydrolysis of alpha-D-mannosyl-glycerate (MG) to D-glycerate and D-mannose. Can also hydrolyze alpha-D-glucopyranosyl-glycerate (GG)with lower efficiency. The chain is Mannosylglycerate hydrolase MGH2 from Selaginella moellendorffii (Spikemoss).